A 475-amino-acid chain; its full sequence is MVKGNVIVVSNRIPVTIKKTEDDENGKSRYDYTMSSGGLVTALQGLKNPFRWFGWPGMSVDSEQGRQTVERDLKEKFNCYPIWLSDEIADLHYNGFSNSILWPLFHYHPGEMNFDEIAWAAYLEANKLFCQTILKEIKDGDVIWVHDYHLMLLPSLLRDQLNSKGLPNVKIGFFLHTPFPSSEIYRILPVRKEILEGVLSCDLIGFHTYDYVRHFLSSVERILKLRTSPQGVVYNDRQVTVSAYPIGIDVDKFLNGLKTDEVKSRIKQLETRFGKDCKLIIGVDRLDYIKGVPQKLHAFEIFLERHPEWIGKVVLIQVAVPSRGDVEEYQSLRAAVNELVGRINGRFGTVEFVPIHFLHKSVNFQELISVYAASDVCVVSSTRDGMNLVSYEYIACQQDRKGSLVLSEFAGAAQSLNGALVVNPWNTEELSEAIYEGLIMSEEKRRGNFQKMFKYIEKYTASYWGENFVKELTRV.

Tyrosine 93 and aspartate 147 together coordinate D-glucose 6-phosphate. Arginine 285 and lysine 290 together coordinate UDP. Residues arginine 285 and lysine 290 each coordinate UDP-alpha-D-glucose. Arginine 323 lines the D-glucose 6-phosphate pocket. 384–392 (DGMNLVSYE) contributes to the UDP-alpha-D-glucose binding site. 388–392 (LVSYE) provides a ligand contact to UDP.

This sequence belongs to the glycosyltransferase 20 family.

It carries out the reaction D-glucose 6-phosphate + UDP-alpha-D-glucose = alpha,alpha-trehalose 6-phosphate + UDP + H(+). It functions in the pathway carbohydrate biosynthesis. In terms of biological role, synthase catalytic subunit of the trehalose synthase complex that catalyzes the production of trehalose from glucose-6-phosphate and UDP-alpha-D-glucose in a two step process. This Pichia angusta (Yeast) protein is Alpha,alpha-trehalose-phosphate synthase [UDP-forming].